The sequence spans 455 residues: Nucleolar protein 12 (455 aa).

Disordered regions lie at residues 1–104 (MSSF…ENEN) and 117–142 (QNEEQDESKESSEAKSSKVAEERTKA). Residues 24–37 (NTRDGPVSKDELVK) show a composition bias toward basic and acidic residues. The span at 51–66 (PKQQTNENESTLNQSA) shows a compositional bias: polar residues. Positions 68 to 91 (ESDEEEEEYNDESNEGDDSDDAEQ) are enriched in acidic residues. Basic and acidic residues predominate over residues 124-141 (SKESSEAKSSKVAEERTK). RRM domains lie at 160-258 (RTVF…HVSH) and 266-351 (RTIF…RAKS). 2 disordered regions span residues 333-402 (LETG…RSTV) and 420-455 (AIKGIKGSKKGKKVKKPRIRERSTKFKEERKTMNKV). A compositionally biased stretch (basic residues) spans 339–348 (KKGRKLRISR). Residues 349-363 (AKSNAKPSLMSPNHF) show a composition bias toward polar residues. Residues 425–438 (KGSKKGKKVKKPRI) show a composition bias toward basic residues. A compositionally biased stretch (basic and acidic residues) spans 439-455 (RERSTKFKEERKTMNKV).

Belongs to the RRM RBM34 family.

The protein localises to the nucleus. Its subcellular location is the nucleolus. In terms of biological role, involved in pre-25S rRNA processing. The sequence is that of Nucleolar protein 12 (NOP12) from Candida albicans (strain SC5314 / ATCC MYA-2876) (Yeast).